A 134-amino-acid polypeptide reads, in one-letter code: MSWQTYVDDHLMCDIEGHEDHRLTAAAIVGHDGSVWAQSATFPQFKPEEMNGIMTDFNEPGHLAPTGLHLGGTKYMVIQGEAGAVIRGKKGSGGITIKKTGQALVFGIYEEPVTPGQCNMVVERLGDYLLEQGL.

Cys13 and Cys118 form a disulfide bridge. Residues 84–100 (AVIRGKKGSGGITIKKT) carry the Involved in PIP2 interaction motif. Thr114 is subject to Phosphothreonine.

The protein belongs to the profilin family. Occurs in many kinds of cells as a complex with monomeric actin in a 1:1 ratio. In terms of processing, phosphorylated by MAP kinases.

It localises to the cytoplasm. Its subcellular location is the cytoskeleton. In terms of biological role, binds to actin and affects the structure of the cytoskeleton. At high concentrations, profilin prevents the polymerization of actin, whereas it enhances it at low concentrations. This Olea europaea (Common olive) protein is Profilin-3.